Consider the following 76-residue polypeptide: uncharacterized protein (76 aa).

This is an uncharacterized protein from Enterobacteria phage T4 (Bacteriophage T4).